The following is a 135-amino-acid chain: Galectin-1 (135 aa).

N-acetylalanine is present on Ala2. The 132-residue stretch at 4–135 (GLVASNLNLK…DFKIKCVAFD (132 aa)) folds into the Galectin domain. Lys13 and Lys29 each carry N6-acetyllysine. Ser30 is modified (phosphoserine). Residues 45–49 (HFNPR), His53, Asn62, and 69–72 (WGTE) contribute to the a beta-D-galactoside site. Residue Lys108 is modified to N6-acetyllysine; alternate. Position 108 is an N6-succinyllysine; alternate (Lys108). N6-acetyllysine is present on Lys128.

Homodimer. Binds LGALS3BP. Interacts with CD2, CD3, CD4, CD6, CD7, CD43, ALCAM and CD45. Interacts with laminin (via poly-N-acetyllactosamine). Interacts with SUSD2.

The protein localises to the secreted. The protein resides in the extracellular space. Its subcellular location is the extracellular matrix. Functionally, lectin that binds beta-galactoside and a wide array of complex carbohydrates. Plays a role in regulating apoptosis, cell proliferation and cell differentiation. Inhibits CD45 protein phosphatase activity and therefore the dephosphorylation of Lyn kinase. Strong inducer of T-cell apoptosis. The sequence is that of Galectin-1 (LGALS1) from Pongo abelii (Sumatran orangutan).